The chain runs to 1044 residues: Pre-mRNA-splicing factor ATP-dependent RNA helicase DHX16 (1044 aa).

2 disordered regions span residues 101–210 and 374–394; these read EDSE…AYEE and LQGN…QKES. 3 positions are modified to phosphoserine: Ser-103, Ser-106, and Ser-107. A compositionally biased stretch (basic residues) spans 119 to 130; sequence QKKRKKRKHLRK. Residues 134–143 show a composition bias toward acidic residues; sequence EEEEEEEEEA. The residue at position 163 (Ser-163) is a Phosphoserine. The span at 169–210 shows a compositional bias: basic and acidic residues; that stretch reads RTERERLQDLEERDAFAERVRQRDKDRTRNVLERSDKKAYEE. The 165-residue stretch at 412 to 576 folds into the Helicase ATP-binding domain; that stretch reads LAAIANHQVL…FDDAPVFRIP (165 aa). 425–432 is a binding site for ATP; that stretch reads GETGSGKT. Residues 523-526 carry the DEAH box motif; that stretch reads DEAH. The Helicase C-terminal domain occupies 601 to 774; it reads SVLQIHVTQP…NVVLLLKSLG (174 aa). Thr-715 carries the post-translational modification Phosphothreonine.

It belongs to the DEAD box helicase family. DEAH subfamily. DDX16/PRP8 sub-subfamily. Component of pre-catalytic spliceosome complexes. Component of the minor spliceosome, which splices U12-type introns. Interacts with GPKOW. Interacts with TRIM6. Interacts with RIGI.

The protein localises to the nucleus. Its subcellular location is the nucleoplasm. The protein resides in the cytoplasm. It carries out the reaction ATP + H2O = ADP + phosphate + H(+). Functionally, required for pre-mRNA splicing as a component of the spliceosome. Contributes to pre-mRNA splicing after spliceosome formation and prior to the first transesterification reaction. As a component of the minor spliceosome, involved in the splicing of U12-type introns in pre-mRNAs. Also plays a role in innate antiviral response by acting as a pattern recognition receptor sensing splicing signals in viral RNA. Mechanistically, TRIM6 promotes the interaction between unanchored 'Lys-48'-polyubiquitin chains and DHX16, leading to DHX16 interaction with RIGI and ssRNA to amplify RIGI-dependent innate antiviral immune responses. This chain is Pre-mRNA-splicing factor ATP-dependent RNA helicase DHX16 (DHX16), found in Pan troglodytes (Chimpanzee).